A 112-amino-acid chain; its full sequence is MNSAGYEVFEVLSGQSFRCAEGQSVLRAMEAQGKRCIPVGCRGGGCGLCRVRVLSGAYRSGRMSRGHVPAKAAAEALALACQVFPQTDLTIEYFRHVGGNKPDNMNYEEVTS.

Positions 6–97 (YEVFEVLSGQ…DLTIEYFRHV (92 aa)) constitute a 2Fe-2S ferredoxin-type domain. Cysteine 41, cysteine 46, cysteine 49, and cysteine 81 together coordinate [2Fe-2S] cluster.

It belongs to the 2Fe2S plant-type ferredoxin family.

The protein operates within aromatic compound metabolism; catechol degradation. Its function is as follows. Ferredoxins are iron-sulfur proteins that transfer electrons in a wide variety of metabolic reactions. The sequence is that of Ferredoxin, plant-type (xylT) from Pseudomonas putida (Arthrobacter siderocapsulatus).